Reading from the N-terminus, the 560-residue chain is Hypermethylated in cancer 2 protein (560 aa).

One can recognise a BTB domain in the interval Cys24–Asp87. 2 disordered regions span residues Arg122 to Arg163 and His183 to Asn367. Polar residues-rich tracts occupy residues Asn126 to Ser153 and His183 to Cys203. The span at Glu224 to Ser242 shows a compositional bias: low complexity. The span at Thr243 to Thr259 shows a compositional bias: polar residues. A compositionally biased stretch (basic and acidic residues) spans Pro296–Arg308. Low complexity predominate over residues Glu348–Asn362. C2H2-type zinc fingers lie at residues Tyr387–His409, Phe450–His472, Phe478–His500, Phe506–His528, and Tyr534–His556.

The protein belongs to the krueppel C2H2-type zinc-finger protein family. Hic subfamily.

Its subcellular location is the nucleus. Transcriptional repressor. The sequence is that of Hypermethylated in cancer 2 protein (hic2) from Danio rerio (Zebrafish).